The following is a 637-amino-acid chain: Mitochondrial Rho GTPase 1 (637 aa).

The Cytoplasmic segment spans residues 1 to 613; that stretch reads MSDGETLADV…LRRVFYLSDS (613 aa). Positions 7 to 184 constitute a Miro 1 domain; the sequence is LADVRIVLIG…FYYAQKAVIY (178 aa). GTP contacts are provided by residues 28–35, 74–78, and 135–138; these read SLLEDEWV, ISEMR, and LPSG. 2 consecutive EF-hand domains span residues 200–235 and 320–355; these read RAKK…CFGI and EGVQ…CSAP. Ca(2+) is bound by residues Asp-213, Asp-215, Asp-217, Tyr-219, Glu-224, Asp-333, Asp-335, Asp-337, Cys-339, and Glu-344. Positions 436–601 constitute a Miro 2 domain; it reads RKVFQCLVVG…FEQLAMMAVY (166 aa). GTP contacts are provided by residues 445-452, 482-486, and 549-552; these read GAKDAGKT, KVKEE, and TKVE. The chain crosses the membrane as a helical; Anchor for type IV membrane protein span at residues 614-634; it reads NLLSKITFGAAIVALAGFLVL. The Mitochondrial intermembrane segment spans residues 635–637; it reads KNL.

The protein belongs to the mitochondrial Rho GTPase family.

The protein resides in the mitochondrion outer membrane. In terms of biological role, mitochondrial GTPase involved in mitochondrial trafficking. Probably involved in control of anterograde transport of mitochondria and their subcellular distribution. The chain is Mitochondrial Rho GTPase 1 from Caenorhabditis briggsae.